The sequence spans 65 residues: Ferredoxin-1 (65 aa).

One can recognise a 4Fe-4S ferredoxin-type domain in the interval 3 to 31 (RKFYVDQDECIACESCVEIAPGAFAMDPE). C12, C15, C18, and C55 together coordinate [4Fe-4S] cluster.

In terms of assembly, homodimer. [4Fe-4S] cluster serves as cofactor.

Ferredoxins are iron-sulfur proteins that transfer electrons in a wide variety of metabolic reactions. The chain is Ferredoxin-1 (fd1) from Desulfocurvibacter africanus (Desulfovibrio africanus).